The sequence spans 346 residues: Probable WRKY transcription factor 54 (346 aa).

Positions 109-130 (PVSCNGGDSGESKKKRLGVGKG) are disordered. The segment covering 121–130 (KKKRLGVGKG) has biased composition (basic residues). The segment at residues 146-214 (VEAKSSEDRY…YIGYHTCTAN (69 aa)) is a DNA-binding region (WRKY). The segment covering 267 to 282 (VKEEQNNNGDQSKDYY) has biased composition (basic and acidic residues). The interval 267–286 (VKEEQNNNGDQSKDYYEGSS) is disordered.

This sequence belongs to the WRKY group III family. Interacts with WRKY30. Binds to BZR2/BES1 to cooperatively regulate the expression of target genes. Interacts with ASK7/BIN2. In terms of processing, phosphorylated and destabilized by ASK7/BIN2. Expressed in leaves.

It localises to the nucleus. Its function is as follows. Transcription factor. Interacts specifically with the W box (5'-(T)TGAC[CT]-3'), a frequently occurring elicitor-responsive cis-acting element. Together with WRKY70, negative regulator of developmental senescence, probably via the regulation of several senescence-associated markers genes. Positive regulator of EDS1-dependent defense against E.amylovora. In collaboration with WRKY70, prevents stomatal closure and, consequently, osmotic stress tolerance. Together with WRKY46 and WRKY70, promotes brassinosteroid (BR)-regulated plant growth but prevent drought response by modulating gene expression. Negative regulator of SA biosynthesis. Prevents defense response to the necrotrophic pathogens P.carotovorum and B.cinerea, but promotes defense against biotrophic/hemibiotrophic pathogens P.syringae pv. tomato (Pst) DC3000, probably by regulating negatively the jasmonic acid (JA)/ethylene (ET) and positively the salicylic acid (SA) signaling pathways. This Arabidopsis thaliana (Mouse-ear cress) protein is Probable WRKY transcription factor 54.